Reading from the N-terminus, the 1488-residue chain is DNA polymerase alpha catalytic subunit (1488 aa).

Disordered regions lie at residues 1-22, 79-124, and 236-325; these read MSESPSEPRAKRQRVDKNGRFA, LRDF…TGKA, and FFSS…ESED. Over residues 83–93 the composition is skewed to acidic residues; that stretch reads FEDEDEYSDGE. Residues 96–103 carry the Nuclear localization signal motif; it reads RKDSKKKK. Residues 99–113 show a composition bias toward basic residues; it reads SKKKKGVAPNSKKRP. Phosphoserine is present on Ser-239. Positions 242 to 258 are enriched in basic and acidic residues; it reads IKKEPMPEKTPAKKATE. Over residues 260–278 the composition is skewed to acidic residues; sequence PFSDNEMDFSCLDDDENQF. Phosphoserine is present on residues Ser-262 and Ser-269. Polar residues predominate over residues 286–303; that stretch reads TEKVSQTKTAAEKTSQSK. The span at 304–325 shows a compositional bias: basic and acidic residues; sequence VAEKSAPKKETTGSPKESESED. Thr-314 bears the Phosphothreonine mark. The residue at position 317 (Ser-317) is a Phosphoserine. The interval 638 to 758 is contains conserved residues essential for 3' -&gt; 5' exonuclease activities; it reads DSERALLSWF…DLLEMYEKGE (121 aa). 2 DNA-binding regions span residues 675-734 and 1255-1380; these read QIVA…CKQV and PTKF…RKKS. Residues Cys-1296, Cys-1299, Cys-1324, Cys-1329, Cys-1362, Cys-1367, Cys-1385, and Cys-1388 each contribute to the Zn(2+) site. Residues 1296–1327 form a CysA-type zinc finger; the sequence is CVTCKTEQLMASAYRPGPSNSHIAVLQQCAKS. Positions 1362-1388 match the CysB motif motif; that stretch reads CDHPDCNFNTRTHSLRKKSHRPLCQKC.

This sequence belongs to the DNA polymerase type-B family. In terms of assembly, component of the alpha DNA polymerase complex (also known as the alpha DNA polymerase-primase complex) consisting of four subunits: the catalytic subunit PolA1, the regulatory subunit PolA2, and the primase complex subunits Prim1 and Prim2 respectively. PolA1 associates with the DNA primase complex before association with PolA2. Interacts with Dpit47; the interaction inhibits the activity of the DNA polymerase and occurs only in proliferating cells but not in quiescent cells. In embryos, a cleaved form of 130 kDa is produced up to cycle 14 and then disappears. In terms of tissue distribution, expressed in embryos (at protein level).

The protein localises to the nucleus. The enzyme catalyses DNA(n) + a 2'-deoxyribonucleoside 5'-triphosphate = DNA(n+1) + diphosphate. Inhibited by N2-(p-n-butylphenyl) deoxyguanosine 5'-triphosphate and N2-(p-n-butylphenyl) deoxyadenosine 5'-triphosphate. DNA synthesis is not inhibited by fungal toxin alpha-amaitin. The 3'-5' exonuclease activity is inhibited by 10mM dGMP. Its function is as follows. Catalytic subunit of the DNA polymerase alpha complex (also known as the alpha DNA polymerase-primase complex) which plays an essential role in the initiation of DNA synthesis. During the S phase of the cell cycle, the DNA polymerase alpha complex (composed of a catalytic subunit PolA1, an accessory subunit PolA2 and two primase subunits, the catalytic subunit Prim1 and the regulatory subunit Prim2) is recruited to DNA at the replicative forks. The primase subunit of the polymerase alpha complex initiates DNA synthesis by oligomerising short RNA primers on both leading and lagging strands. These primers are initially extended by the polymerase alpha catalytic subunit and subsequently transferred to polymerase delta and polymerase epsilon for processive synthesis on the lagging and leading strand, respectively. In addition to polymerase activity, exhibits 3' to 5' exonuclease activity. This chain is DNA polymerase alpha catalytic subunit, found in Drosophila melanogaster (Fruit fly).